The sequence spans 358 residues: 4-hydroxy-3-methylbut-2-en-1-yl diphosphate synthase (flavodoxin) (358 aa).

Residues C264, C267, C299, and E306 each coordinate [4Fe-4S] cluster.

It belongs to the IspG family. [4Fe-4S] cluster is required as a cofactor.

The catalysed reaction is (2E)-4-hydroxy-3-methylbut-2-enyl diphosphate + oxidized [flavodoxin] + H2O + 2 H(+) = 2-C-methyl-D-erythritol 2,4-cyclic diphosphate + reduced [flavodoxin]. Its pathway is isoprenoid biosynthesis; isopentenyl diphosphate biosynthesis via DXP pathway; isopentenyl diphosphate from 1-deoxy-D-xylulose 5-phosphate: step 5/6. Converts 2C-methyl-D-erythritol 2,4-cyclodiphosphate (ME-2,4cPP) into 1-hydroxy-2-methyl-2-(E)-butenyl 4-diphosphate. The sequence is that of 4-hydroxy-3-methylbut-2-en-1-yl diphosphate synthase (flavodoxin) from Helicobacter acinonychis (strain Sheeba).